The chain runs to 685 residues: Putative lipase ROG1 (685 aa).

The Charge relay system role is filled by serine 269.

Belongs to the putative lipase ROG1 family.

The protein is Putative lipase ROG1 (ROG1) of Saccharomyces cerevisiae (strain ATCC 204508 / S288c) (Baker's yeast).